Here is a 383-residue protein sequence, read N- to C-terminus: MLRYLTAGESHGRGLSVIVEGLPAGVPLTDGDINTWLTRRQGGYGRGGRMAIERDQAEILAGVRGGLTLGSPIALFIANRDWENWQEIMAPGPEARAARVVTRPRPGHADLAGGLKYHQADLRNILERASARETAARVAAGAVAAVLLKELAIELAFHVVRIGPVEVREQVDWEAACRAVESPVYCADPEAGRAMVAAIEEARQQGDTLGGVVEVLARGVPAGLGSHVHWDRRLDGRLAQALMSIPAIKGVEIGAGFRVAALPGSRAHDAIAYRKGQGFYHPTNRAGGLEGGLTNGETLVLRAAMKPIPTLMHPLPSVDLVTKQPATASIERSDVCAVPAAAVVAAAAVAWVLAGAILEQFGGDYLPVIQERLAAYRQYLQEI.

NADP(+) contacts are provided by arginine 40 and arginine 46. Residues 128–130 (RAS), glycine 291, 306–310 (KPIPT), and arginine 332 contribute to the FMN site.

The protein belongs to the chorismate synthase family. In terms of assembly, homotetramer. The cofactor is FMNH2.

The catalysed reaction is 5-O-(1-carboxyvinyl)-3-phosphoshikimate = chorismate + phosphate. The protein operates within metabolic intermediate biosynthesis; chorismate biosynthesis; chorismate from D-erythrose 4-phosphate and phosphoenolpyruvate: step 7/7. Catalyzes the anti-1,4-elimination of the C-3 phosphate and the C-6 proR hydrogen from 5-enolpyruvylshikimate-3-phosphate (EPSP) to yield chorismate, which is the branch point compound that serves as the starting substrate for the three terminal pathways of aromatic amino acid biosynthesis. This reaction introduces a second double bond into the aromatic ring system. This chain is Chorismate synthase, found in Moorella thermoacetica (strain ATCC 39073 / JCM 9320).